We begin with the raw amino-acid sequence, 125 residues long: UPF0538 protein C2C4.04c (125 aa).

The protein belongs to the UPF0538 family.

This is UPF0538 protein C2C4.04c from Schizosaccharomyces pombe (strain 972 / ATCC 24843) (Fission yeast).